The sequence spans 219 residues: Swarming motility regulation protein RssB (219 aa).

The 115-residue stretch at 2 to 116 (NILLVEDDLQ…ELISRVKAVN (115 aa)) folds into the Response regulatory domain. The residue at position 51 (D51) is a 4-aspartylphosphate. Positions 124–218 (SQTWSLGALY…VRGIGYLLKK (95 aa)) form a DNA-binding region, ompR/PhoB-type.

The protein localises to the cytoplasm. In terms of biological role, member of the two-component regulatory system RssA/RssB involved in regulation of swarming motility which has been shown to be inhibited by saturated fatty acids. RssA/RssB regulates cellular fatty acid composition, hemolysin production and cell surface topography. RssA/RssB negatively regulates the activity of SlhBA. It can also act as a negative regulator for the control of the swarming initiation. RssB binds its own promoter. This chain is Swarming motility regulation protein RssB (rssB), found in Serratia marcescens.